We begin with the raw amino-acid sequence, 305 residues long: Succinate--CoA ligase [ADP-forming] subunit alpha (305 aa).

Residues 17 to 20 (TGKE), K43, and 96 to 98 (ITE) contribute to the CoA site. A substrate-binding site is contributed by Y161. H249 serves as the catalytic Tele-phosphohistidine intermediate.

This sequence belongs to the succinate/malate CoA ligase alpha subunit family. In terms of assembly, heterotetramer of two alpha and two beta subunits.

The enzyme catalyses succinate + ATP + CoA = succinyl-CoA + ADP + phosphate. It carries out the reaction GTP + succinate + CoA = succinyl-CoA + GDP + phosphate. Its pathway is carbohydrate metabolism; tricarboxylic acid cycle; succinate from succinyl-CoA (ligase route): step 1/1. Functionally, succinyl-CoA synthetase functions in the citric acid cycle (TCA), coupling the hydrolysis of succinyl-CoA to the synthesis of either ATP or GTP and thus represents the only step of substrate-level phosphorylation in the TCA. The alpha subunit of the enzyme binds the substrates coenzyme A and phosphate, while succinate binding and nucleotide specificity is provided by the beta subunit. This Aquifex aeolicus (strain VF5) protein is Succinate--CoA ligase [ADP-forming] subunit alpha.